The primary structure comprises 307 residues: Ribonuclease Z (307 aa).

Zn(2+) contacts are provided by histidine 63, histidine 65, aspartate 67, histidine 68, histidine 141, aspartate 212, and histidine 270. The active-site Proton acceptor is aspartate 67.

The protein belongs to the RNase Z family. In terms of assembly, homodimer. Zn(2+) is required as a cofactor.

It catalyses the reaction Endonucleolytic cleavage of RNA, removing extra 3' nucleotides from tRNA precursor, generating 3' termini of tRNAs. A 3'-hydroxy group is left at the tRNA terminus and a 5'-phosphoryl group is left at the trailer molecule.. In terms of biological role, zinc phosphodiesterase, which displays some tRNA 3'-processing endonuclease activity. Probably involved in tRNA maturation, by removing a 3'-trailer from precursor tRNA. The polypeptide is Ribonuclease Z (Bacillus thuringiensis subsp. konkukian (strain 97-27)).